The primary structure comprises 416 residues: Isobutyryl-CoA dehydrogenase, mitochondrial (416 aa).

The transit peptide at 1–23 (MMLRGGCQRVGARLRGLRRGPRG) directs the protein to the mitochondrion. N6-acetyllysine; alternate is present on Lys51. Lys51 carries the post-translational modification N6-succinyllysine; alternate. FAD-binding positions include 159–168 (YCLTEPGSGS) and 192–194 (FIS). Ser168 lines the substrate pocket. Position 232 is an N6-acetyllysine (Lys232). Lys272 bears the N6-succinyllysine mark. Residue 275 to 278 (NGGR) participates in substrate binding. FAD contacts are provided by residues Arg303, 313-314 (SQ), and 372-376 (QMHGG). The active-site Proton acceptor is the Glu399. FAD is bound at residue 401 to 403 (SNE). Arg411 provides a ligand contact to substrate.

This sequence belongs to the acyl-CoA dehydrogenase family. As to quaternary structure, homotetramer, formed by a dimer of dimers. FAD serves as cofactor.

The protein localises to the mitochondrion. It catalyses the reaction 2-methylpropanoyl-CoA + oxidized [electron-transfer flavoprotein] + H(+) = 2-methylpropenoyl-CoA + reduced [electron-transfer flavoprotein]. The catalysed reaction is (2S)-2-methylbutanoyl-CoA + oxidized [electron-transfer flavoprotein] + H(+) = (2E)-2-methylbut-2-enoyl-CoA + reduced [electron-transfer flavoprotein]. The enzyme catalyses propanoyl-CoA + oxidized [electron-transfer flavoprotein] + H(+) = acryloyl-CoA + reduced [electron-transfer flavoprotein]. It functions in the pathway amino-acid degradation; L-valine degradation. Functionally, isobutyryl-CoA dehydrogenase which catalyzes the conversion of 2-methylpropanoyl-CoA to (2E)-2-methylpropenoyl-CoA in the valine catabolic pathway. To a lesser extent, also able to catalyze the oxidation of (2S)-2-methylbutanoyl-CoA. The chain is Isobutyryl-CoA dehydrogenase, mitochondrial (ACAD8) from Bos taurus (Bovine).